The sequence spans 117 residues: MDKKASRIRRATRARRKIAELGATRLVVHRTPRHVYAQVISANGSEVIAAASTVEKAIREQVKNTGNVDAAKAVGKAVAERALEKGVASVAFDRSGFQYHGRVAALAESAREAGLKF.

Belongs to the universal ribosomal protein uL18 family. Part of the 50S ribosomal subunit; part of the 5S rRNA/L5/L18/L25 subcomplex. Contacts the 5S and 23S rRNAs.

Functionally, this is one of the proteins that bind and probably mediate the attachment of the 5S RNA into the large ribosomal subunit, where it forms part of the central protuberance. This chain is Large ribosomal subunit protein uL18, found in Vibrio atlanticus (strain LGP32) (Vibrio splendidus (strain Mel32)).